The chain runs to 38 residues: Non-specific lipid-transfer protein P2 (38 aa).

It belongs to the plant LTP family.

The protein localises to the secreted. Its function is as follows. Plant non-specific lipid-transfer proteins transfer phospholipids as well as galactolipids across membranes. May play a role in wax or cutin deposition in the cell walls of expanding epidermal cells and certain secretory tissues. This Vitis sp. (Grape) protein is Non-specific lipid-transfer protein P2.